Reading from the N-terminus, the 414-residue chain is Glucose-1-phosphate adenylyltransferase (414 aa).

Alpha-D-glucose 1-phosphate contacts are provided by residues G164, 181-182 (EK), and S199.

The protein belongs to the bacterial/plant glucose-1-phosphate adenylyltransferase family. As to quaternary structure, homotetramer.

It carries out the reaction alpha-D-glucose 1-phosphate + ATP + H(+) = ADP-alpha-D-glucose + diphosphate. It functions in the pathway glycan biosynthesis; glycogen biosynthesis. Involved in the biosynthesis of ADP-glucose, a building block required for the elongation reactions to produce glycogen. Catalyzes the reaction between ATP and alpha-D-glucose 1-phosphate (G1P) to produce pyrophosphate and ADP-Glc. The protein is Glucose-1-phosphate adenylyltransferase of Kocuria rhizophila (strain ATCC 9341 / DSM 348 / NBRC 103217 / DC2201).